The chain runs to 512 residues: 2,3-bisphosphoglycerate-independent phosphoglycerate mutase (512 aa).

The Mn(2+) site is built by Asp12 and Ser62. Residue Ser62 is the Phosphoserine intermediate of the active site. Residues His123, 153-154 (RD), Arg185, Arg191, 260-263 (RPDR), and Lys333 contribute to the substrate site. The Mn(2+) site is built by Asp400, His404, Asp441, His442, and His460.

The protein belongs to the BPG-independent phosphoglycerate mutase family. In terms of assembly, monomer. The cofactor is Mn(2+).

The enzyme catalyses (2R)-2-phosphoglycerate = (2R)-3-phosphoglycerate. Its pathway is carbohydrate degradation; glycolysis; pyruvate from D-glyceraldehyde 3-phosphate: step 3/5. In terms of biological role, catalyzes the interconversion of 2-phosphoglycerate and 3-phosphoglycerate. The chain is 2,3-bisphosphoglycerate-independent phosphoglycerate mutase from Clostridium beijerinckii (strain ATCC 51743 / NCIMB 8052) (Clostridium acetobutylicum).